A 324-amino-acid chain; its full sequence is Putative F-box/kelch-repeat protein At5g28160 (324 aa).

Residues 7-54 (RPSFLSLPDEIILSCLARISRSYYPKLSLVCKTFRTLLISNELIVARL) form the F-box domain. The stretch at 170-216 (KIYVMGGCMADESVNWGEVFDIKTQTWEALPDPGPEFRFSSIRKIDV) is one Kelch repeat.

The chain is Putative F-box/kelch-repeat protein At5g28160 from Arabidopsis thaliana (Mouse-ear cress).